We begin with the raw amino-acid sequence, 434 residues long: MDYLDLGPYSSASGTVRLPGSKSISNRVLLLAALAEGETTITNLLDSDDTRVMLDALGKLGVKLARDGDTCVVTGTRGAFTAKTADLFLGNAGTAVRPLTAALAVNGGDYRVHGVPRMHERPIGDLVDGLRQIGAQIDYELSEGYPPLRIKPATISVDAPIRVRGDVSSQFLTALLMTLPLVKAKDGQAVVEVDGELISKPYVDITIRLMARFGVTVERDGWQRFVVPAGVRYRSPGRIMVEGDASSASYFLAAGALGGGPLRVEGVGRASIQGDVGFANALMQMGANVTMGDDWIDVRGIGHDRGKLEPIDMDFNLIPDAAMTIAVAALFANGTSTLRNIASWRVKETDRIAAMATELRKVGAIVEEGPDYLVVTPPEKLTPNAAIDTYDDHRMAMCFSLVSLGGVPVRINDPKCVGKTFPDYFDRFAALAKA.

Lysine 22, serine 23, and arginine 27 together coordinate 3-phosphoshikimate. Lysine 22 is a binding site for phosphoenolpyruvate. Glycine 93 and arginine 121 together coordinate phosphoenolpyruvate. 3-phosphoshikimate contacts are provided by serine 168, serine 169, glutamine 170, serine 199, aspartate 320, and lysine 347. Glutamine 170 serves as a coordination point for phosphoenolpyruvate. The active-site Proton acceptor is the aspartate 320. Residues arginine 351, arginine 394, and lysine 419 each contribute to the phosphoenolpyruvate site.

Belongs to the EPSP synthase family. Monomer.

The protein localises to the cytoplasm. It catalyses the reaction 3-phosphoshikimate + phosphoenolpyruvate = 5-O-(1-carboxyvinyl)-3-phosphoshikimate + phosphate. The protein operates within metabolic intermediate biosynthesis; chorismate biosynthesis; chorismate from D-erythrose 4-phosphate and phosphoenolpyruvate: step 6/7. Catalyzes the transfer of the enolpyruvyl moiety of phosphoenolpyruvate (PEP) to the 5-hydroxyl of shikimate-3-phosphate (S3P) to produce enolpyruvyl shikimate-3-phosphate and inorganic phosphate. The protein is 3-phosphoshikimate 1-carboxyvinyltransferase of Burkholderia orbicola (strain AU 1054).